The sequence spans 682 residues: Tail-specific protease (682 aa).

The N-terminal stretch at 1 to 22 is a signal peptide; it reads MNMFFRLTALAGLLAIAGQTFA. The region spanning 238 to 322 is the PDZ domain; the sequence is NTEMSLSLEG…SKVRLEILPA (85 aa). Catalysis depends on charge relay system residues Ser452, Asp463, and Lys477. Over residues 635 to 650 the composition is skewed to basic and acidic residues; the sequence is GKPELKKLDDLPKDYQ. The segment at 635–654 is disordered; the sequence is GKPELKKLDDLPKDYQEPDP.

The protein belongs to the peptidase S41A family.

The protein localises to the cell inner membrane. The catalysed reaction is The enzyme shows specific recognition of a C-terminal tripeptide, Xaa-Yaa-Zaa, in which Xaa is preferably Ala or Leu, Yaa is preferably Ala or Tyr, and Zaa is preferably Ala, but then cleaves at a variable distance from the C-terminus. A typical cleavage is -Ala-Ala-|-Arg-Ala-Ala-Lys-Glu-Asn-Tyr-Ala-Leu-Ala-Ala.. Its function is as follows. Involved in the cleavage of a C-terminal peptide of 11 residues from the precursor form of penicillin-binding protein 3 (PBP3). May be involved in protection of the bacterium from thermal and osmotic stresses. The polypeptide is Tail-specific protease (prc) (Escherichia coli (strain K12)).